A 331-amino-acid polypeptide reads, in one-letter code: MGHCFSLPSSQSEIHEDNEHGDGNVVCYGEEFGLDQDLPVHRLGSVCSIQGTKVLNQDHAVLYQGYGTRDTELCGVFDGHGKNGHMVSKMVRNRLPSVLLALKEELNQESNVCEEEASKWEKACFTAFRLIDRELNLQVFNCSFSGSTGVVAITQGDDLVIANLGDSRAVLGTMTEDGEIKAVQLTSDLTPDVPSEAERIRMCKGRVFAMKTEPSSQRVWLPNQNIPGLAMSRAFGDFRLKDHGVIAVPEISQHRITSKDQFLVLATDGVWDMLSNDEVVSLIWSSGKKQASAAKMVAEAAEAAWKKRLKYTKVDDITVICLFLQNKEQPS.

One can recognise a PPM-type phosphatase domain in the interval 43–324 (LGSVCSIQGT…DDITVICLFL (282 aa)). The Mn(2+) site is built by Asp78, Gly79, Asp268, and Asp315.

This sequence belongs to the PP2C family. Mg(2+) is required as a cofactor. The cofactor is Mn(2+).

It carries out the reaction O-phospho-L-seryl-[protein] + H2O = L-seryl-[protein] + phosphate. The catalysed reaction is O-phospho-L-threonyl-[protein] + H2O = L-threonyl-[protein] + phosphate. The chain is Probable protein phosphatase 2C 72 from Arabidopsis thaliana (Mouse-ear cress).